The chain runs to 242 residues: 2-C-methyl-D-erythritol 4-phosphate cytidylyltransferase (242 aa).

This sequence belongs to the IspD/TarI cytidylyltransferase family. IspD subfamily.

The catalysed reaction is 2-C-methyl-D-erythritol 4-phosphate + CTP + H(+) = 4-CDP-2-C-methyl-D-erythritol + diphosphate. It functions in the pathway isoprenoid biosynthesis; isopentenyl diphosphate biosynthesis via DXP pathway; isopentenyl diphosphate from 1-deoxy-D-xylulose 5-phosphate: step 2/6. Functionally, catalyzes the formation of 4-diphosphocytidyl-2-C-methyl-D-erythritol from CTP and 2-C-methyl-D-erythritol 4-phosphate (MEP). The polypeptide is 2-C-methyl-D-erythritol 4-phosphate cytidylyltransferase (Shewanella loihica (strain ATCC BAA-1088 / PV-4)).